A 245-amino-acid polypeptide reads, in one-letter code: DNA polymerase sliding clamp 2 (245 aa).

Belongs to the PCNA family. As to quaternary structure, forms homodimers with PCNA1, which then recruit PCNA3; does not form homotrimers. The heterodimers interact with RfcS homotetramers. Heterotrimer which circularizes head-to-tail (head is at N-terminus, tail is at C-terminus) to form a toroid; DNA passes through its center. Replication factor C (RFC) is required to load the toroid on the DNA. This subunit interacts with DNA polymerase I (dpo1). The heterotrimer also interacts with flap endonuclease 1, DNA ligase and XPF via the other subunits.

Its function is as follows. One of the sliding clamp subunits that acts as a moving platform for DNA processing. Responsible for tethering the catalytic subunit of DNA polymerase to DNA during high-speed replication. Heterotrimer stimulates the Holliday junction resolvase Hjc. DNA polymerase I, DNA ligase and the flap endonuclease may be constitutively associated with the PCNA heterotrimer forming a scanning complex able to couple DNA synthesis and Okazaki fragment maturation. In Saccharolobus solfataricus (strain ATCC 35092 / DSM 1617 / JCM 11322 / P2) (Sulfolobus solfataricus), this protein is DNA polymerase sliding clamp 2.